A 127-amino-acid chain; its full sequence is Protein NEGATIVE REGULATOR OF RESISTANCE (127 aa).

2 disordered regions span residues 1 to 28 and 47 to 127; these read MDATTTAKRKRPAASDIADDAPTTVDEV and TRRL…RAPA. Residues 112–127 are compositionally biased toward low complexity; it reads PPSDAPATPRSARAPA.

Belongs to the NPR1-interactor family. In terms of assembly, interacts with NPR1/NH1. Interacts with NPR3/NH3.

It localises to the nucleus. Its function is as follows. Acts as a negative regulator of disease resistance. Acts on basal resistance, age-related resistance and resistance mediated by the LRR receptor kinase XA21. Plants over-expressing NRR display enhanced susceptibility to the bacterial blight Xanthomonas oryzae pv. oryzae (Xoo). Binds to and represses NPR1/NH1-mediated transcriptional activation of LG2 in vitro. This chain is Protein NEGATIVE REGULATOR OF RESISTANCE, found in Oryza sativa subsp. japonica (Rice).